The chain runs to 161 residues: Nucleotide-binding protein Aave_1854 (161 aa).

The protein belongs to the YajQ family.

In terms of biological role, nucleotide-binding protein. This is Nucleotide-binding protein Aave_1854 from Paracidovorax citrulli (strain AAC00-1) (Acidovorax citrulli).